The sequence spans 727 residues: MEDSYKDRTSLMKGAKDIAKEVKKQTVKKVNQAVDRAQDEYTQRSYSRFQDEEDDDDYYPPGETYSGEVNDDEGSSEATEGHDEEDEIYEGEYQGIPSTNQGKDSIVSVGQPKGDEYKDRRELESERRADEEELAQQYELIIQECGHGRFQWALFFVLGMALMADGVEVFVVGFVLPSAETDLCIPNSGSGWLGSIVYLGMMVGAFFWGGLADKVGRKQSLLICMSVNGFFAFLSSFVQGYGFFLVCRLLSGFGIGGAIPTVFSYFAEVLAREKRGEHLSWLCMFWMIGGIYASAMAWAIIPHYGWSFSMGSAYQFHSWRVFVIVCALPCVSSVVALTFMPESPRFLLEVGKHDEAWMILKLIHDTNMRARGQPEKVFTVNKIKTPKQIDELIEIESDTGTWYRRCFVRIRTELYGIWLTFMRCFNYPVRENTIKLTIVWFTLSFGYYGLSVWFPDVIKHLQSDEYALLTRNVQKDKYANFSINFTMENQIHTGMEYENGRFLGVKFKSVTFKDSVFKSCTFDDVTSVNTYFKNCTFIDTLFDNTDFEPYKFIDSEFQNCSFLHNKTGCQITFDDDYSAYWIYFVNFLGTLAVLPGNIVSALLMDRIGRLTMLGGSMVLSGISCFFLWFGTSESMMIGMLCLYNGLTISAWNSLDVVTVELYPTDRRATGFGFLNALCKAAAVLGNLIFGSLVSITKAIPILLASTVLVCGGLVGLRLPDTRTQVLM.

Residues 1-57 are interaction with SYT1; it reads MEDSYKDRTSLMKGAKDIAKEVKKQTVKKVNQAVDRAQDEYTQRSYSRFQDEEDDDD. Residues 1–154 are Cytoplasmic-facing; it reads MEDSYKDRTS…CGHGRFQWAL (154 aa). A disordered region spans residues 22 to 128; sequence VKKQTVKKVN…DRRELESERR (107 aa). 2 positions are modified to phosphoserine: serine 75 and serine 76. At threonine 79 the chain carries Phosphothreonine. A compositionally biased stretch (basic and acidic residues) spans 113–128; the sequence is KGDEYKDRRELESERR. The chain crosses the membrane as a helical span at residues 155 to 175; sequence FFVLGMALMADGVEVFVVGFV. The Extracellular portion of the chain corresponds to 176-191; that stretch reads LPSAETDLCIPNSGSG. The helical transmembrane segment at 192-212 threads the bilayer; that stretch reads WLGSIVYLGMMVGAFFWGGLA. Residues 213–226 lie on the Cytoplasmic side of the membrane; it reads DKVGRKQSLLICMS. A helical transmembrane segment spans residues 227–247; the sequence is VNGFFAFLSSFVQGYGFFLVC. Position 248 (arginine 248) is a topological domain, extracellular. The helical transmembrane segment at 249 to 269 threads the bilayer; the sequence is LLSGFGIGGAIPTVFSYFAEV. Over 270–280 the chain is Cytoplasmic; the sequence is LAREKRGEHLS. Residues 281-301 form a helical membrane-spanning segment; that stretch reads WLCMFWMIGGIYASAMAWAII. Topologically, residues 302–320 are extracellular; it reads PHYGWSFSMGSAYQFHSWR. The helical transmembrane segment at 321-341 threads the bilayer; that stretch reads VFVIVCALPCVSSVVALTFMP. At 342 to 437 the chain is on the cytoplasmic side; it reads ESPRFLLEVG…PVRENTIKLT (96 aa). A helical membrane pass occupies residues 438–458; that stretch reads IVWFTLSFGYYGLSVWFPDVI. The Extracellular segment spans residues 459–578; the sequence is KHLQSDEYAL…CQITFDDDYS (120 aa). Position 466 is a phosphotyrosine (tyrosine 466). Asparagine 480, asparagine 484, asparagine 534, asparagine 559, and asparagine 565 each carry an N-linked (GlcNAc...) asparagine glycan. A helical transmembrane segment spans residues 579-599; the sequence is AYWIYFVNFLGTLAVLPGNIV. The Cytoplasmic portion of the chain corresponds to 600–609; sequence SALLMDRIGR. A helical membrane pass occupies residues 610 to 630; sequence LTMLGGSMVLSGISCFFLWFG. At 631–636 the chain is on the extracellular side; the sequence is TSESMM. Residues 637–657 traverse the membrane as a helical segment; sequence IGMLCLYNGLTISAWNSLDVV. At 658–670 the chain is on the cytoplasmic side; sequence TVELYPTDRRATG. Residues 671 to 693 form a helical membrane-spanning segment; the sequence is FGFLNALCKAAAVLGNLIFGSLV. The Extracellular segment spans residues 694 to 697; the sequence is SITK. Residues 698-716 form a helical membrane-spanning segment; that stretch reads AIPILLASTVLVCGGLVGL. The Cytoplasmic portion of the chain corresponds to 717 to 727; the sequence is RLPDTRTQVLM.

Belongs to the major facilitator superfamily. In terms of assembly, interacts with SYT1 in a calcium-dependent manner. As to quaternary structure, (Microbial infection) Interacts with C.botulinum neurotoxin type A (BoNT/A, botA). (Microbial infection) Interacts with C.botulinum neurotoxin type D (BoNT/D, botD). In terms of processing, N-glycosylated. In terms of tissue distribution, expressed in specific subsets of conventional synapses in the retina (at protein level). Expressed in diaphragm motor nerve terminals (at protein level). Expressed in a subset of hippocampus neurons (at protein level).

It is found in the cytoplasmic vesicle. Its subcellular location is the secretory vesicle. It localises to the synaptic vesicle membrane. Its function is as follows. Plays a role in the control of regulated secretion in neural and endocrine cells, enhancing selectively low-frequency neurotransmission. Positively regulates vesicle fusion by maintaining the readily releasable pool of secretory vesicles. In terms of biological role, (Microbial infection) Receptor for C.botulinum neurotoxin type A (BoNT/A, botA); the toxin binds Sv2c via extracellular loop 4. Functionally, (Microbial infection) Possible receptor for C.botulinum neurotoxin type D (BoNT/D, botD). The sequence is that of Synaptic vesicle glycoprotein 2C (Sv2c) from Mus musculus (Mouse).